The chain runs to 248 residues: Adenosylcobinamide-GDP ribazoletransferase (248 aa).

7 consecutive transmembrane segments (helical) span residues 24 to 44, 70 to 90, 106 to 126, 134 to 154, 157 to 177, 188 to 210, and 228 to 248; these read EINL…IGAW, IIIT…GLFS, VGAN…SLFL, IGWL…LLFA, TYAG…WWPV, LGLF…TIIY, and AGGQ…WGLI.

The protein belongs to the CobS family. Mg(2+) serves as cofactor.

The protein resides in the cell membrane. The enzyme catalyses alpha-ribazole + adenosylcob(III)inamide-GDP = adenosylcob(III)alamin + GMP + H(+). It catalyses the reaction alpha-ribazole 5'-phosphate + adenosylcob(III)inamide-GDP = adenosylcob(III)alamin 5'-phosphate + GMP + H(+). It functions in the pathway cofactor biosynthesis; adenosylcobalamin biosynthesis; adenosylcobalamin from cob(II)yrinate a,c-diamide: step 7/7. Its function is as follows. Joins adenosylcobinamide-GDP and alpha-ribazole to generate adenosylcobalamin (Ado-cobalamin). Also synthesizes adenosylcobalamin 5'-phosphate from adenosylcobinamide-GDP and alpha-ribazole 5'-phosphate. The polypeptide is Adenosylcobinamide-GDP ribazoletransferase (Listeria monocytogenes serotype 4b (strain CLIP80459)).